Consider the following 610-residue polypeptide: uncharacterized protein (610 aa).

Polar residues predominate over residues 1-28; it reads MDSPSTSESPLKKNTIQDFGESNMTESP. The segment at 1-36 is disordered; the sequence is MDSPSTSESPLKKNTIQDFGESNMTESPQSKEEIDE. Residues 41–82 form an RING-type zinc finger; sequence CSVCKNEIIDTTSLSDCCHEFCYDCIVGWLTKGSGPFCPMCK. Disordered regions lie at residues 390 to 411 and 431 to 515; these read YRGQPQAPLRLGPNATNPFRPA and TSSA…SADR. The segment covering 432-447 has biased composition (low complexity); it reads SSAGAGSARSRGSDSV. Composition is skewed to acidic residues over residues 448-470 and 478-487; these read VEIDDDDDNDGVDVDDDDREDSD and SEEDSDEEIQ.

This is an uncharacterized protein from Caenorhabditis elegans.